A 591-amino-acid chain; its full sequence is MSSTENPDSVAAAEELHALRVEAQVLRRQLAQSPEQVRELESKVDSLSIRNSKLMDTLKEARQQLIALREEVDRLGQPPSGYGVLLSVHEDKTVDVFTSGRKMRLTCSPNIDTDTLALGQTVRLNEALTIVEAGTYEQVGEISTLREVLDDGLRALVVGHADEERIVWLAAPLAAVFADPEADIIAYDADSPTRKLRPGDSLLVDTKAGYAFERIPKAEVEDLVLEEVPDVHYDDIGGLGRQIEQIRDAVELPFLHKDLFHEYSLRPPKGVLLYGPPGCGKTLIAKAVANSLAKKIAEARGQDSKDAKSYFLNIKGPELLNKFVGETERHIRMIFQRAREKASEGTPVIVFFDEMDSIFRTRGSGVSSDVETTVVPQLLSEIDGVEGLENVIVIGASNREDMIDPAILRPGRLDVKIKIERPDAESAQDIFSKYLVDGLPINADDLAEFGGDRTACLKAMIVRVVDRMYAESEENRFLEVTYANGDKEVLFFKDFNSGAMIQNIVDRAKKYAIKSVLDTGAPGLRVQHLFDSIVDEFAENEDLPNTTNPDDWARISGKKGERIVYIRTLVTGKNASASRAIDTESNTGQYL.

Residues 10–77 (VAAAEELHAL…LREEVDRLGQ (68 aa)) are a coiled coil. 278 to 283 (GCGKTL) is an ATP binding site. Residues 590-591 (YL) are docks into pockets in the proteasome alpha-ring.

This sequence belongs to the AAA ATPase family. Homohexamer. Assembles into a hexameric ring structure that likely caps the 20S proteasome core. Can form a complex composed of two stacked hexameric rings in vitro. Probably interacts with the prokaryotic ubiquitin-like protein Pup through a hydrophobic interface; the expected interacting region of ARC lies in its N-terminal coiled-coil domain. There is likely one Pup binding site per ARC hexamer ring. Upon ATP-binding, the C-terminus of ARC probably interacts with the alpha-rings of the proteasome core, possibly by binding to the intersubunit pockets.

It functions in the pathway protein degradation; proteasomal Pup-dependent pathway. Its activity is regulated as follows. ATPase activity is inhibited by N-ethylmaleimide (NEM) but not by sodium azide. ATPase which is responsible for recognizing, binding, unfolding and translocation of pupylated proteins into the bacterial 20S proteasome core particle. May be essential for opening the gate of the 20S proteasome via an interaction with its C-terminus, thereby allowing substrate entry and access to the site of proteolysis. Thus, the C-termini of the proteasomal ATPase may function like a 'key in a lock' to induce gate opening and therefore regulate proteolysis. This chain is Proteasome-associated ATPase, found in Rhodococcus erythropolis (Arthrobacter picolinophilus).